Reading from the N-terminus, the 43-residue chain is MEPATVLSISIGVMVVAITGFSIYTAFGPPSKELVDPFDEHED.

A helical membrane pass occupies residues 7–27 (LSISIGVMVVAITGFSIYTAF).

Belongs to the PsbN family.

The protein resides in the cellular thylakoid membrane. Functionally, may play a role in photosystem I and II biogenesis. The chain is Protein PsbN from Trichodesmium erythraeum (strain IMS101).